Reading from the N-terminus, the 492-residue chain is KAT8 regulatory NSL complex subunit 2 (492 aa).

Lysine 78 is covalently cross-linked (Glycyl lysine isopeptide (Lys-Gly) (interchain with G-Cter in SUMO2)). The segment at 127–182 (LGSQTPESSRSEASRILDEDSWSDGEQEPITVDQTWRGDPDSEADSIDSDQEDPLK) is disordered. Position 131 is a phosphothreonine (threonine 131). The span at 135–144 (SRSEASRILD) shows a compositional bias: basic and acidic residues. 5 positions are modified to phosphoserine: serine 147, serine 149, serine 168, serine 172, and serine 175. A compositionally biased stretch (acidic residues) spans 167-178 (DSEADSIDSDQE). Residues 308–364 (DVRCSNQSLPMTRHCLTHICQDTNQVLFKCCQGSEEVPCNKPVPVSLSEDPCCPLHF) form a required for interaction with other NSL complex members region. The segment at 455-492 (AGDGCRSQGSRNSEKGSAPLSQSGLATANGKPEPTSIS) is disordered.

In terms of assembly, component of the NSL complex at least composed of KAT8/MOF, KANSL1, KANSL2, KANSL3, MCRS1, PHF20, OGT1/OGT, WDR5 and HCFC1.

The protein resides in the nucleus. It is found in the mitochondrion. In terms of biological role, non-catalytic component of the NSL histone acetyltransferase complex, a multiprotein complex that mediates histone H4 acetylation at 'Lys-5'- and 'Lys-8' (H4K5ac and H4K8ac) at transcription start sites and promotes transcription initiation. Required for NSL complex stability and for transcription of intraciliary transport genes in both ciliated and non-ciliated cells by regulating histone H4 acetylation at 'Lys-5'- and 'Lys-12' (H4K5ac and H4K12ac). This is necessary for cilium assembly in ciliated cells and for organization of the microtubule cytoskeleton in non-ciliated cells. Required within the NSL complex to maintain nuclear architecture stability by promoting KAT8-mediated acetylation of lamin LMNA. This is KAT8 regulatory NSL complex subunit 2 (KANSL2) from Pongo abelii (Sumatran orangutan).